Consider the following 123-residue polypeptide: Large ribosomal subunit protein bL12 (123 aa).

The protein belongs to the bacterial ribosomal protein bL12 family. Homodimer. Part of the ribosomal stalk of the 50S ribosomal subunit. Forms a multimeric L10(L12)X complex, where L10 forms an elongated spine to which 2 to 4 L12 dimers bind in a sequential fashion. Binds GTP-bound translation factors.

Its function is as follows. Forms part of the ribosomal stalk which helps the ribosome interact with GTP-bound translation factors. Is thus essential for accurate translation. The protein is Large ribosomal subunit protein bL12 of Hydrogenovibrio crunogenus (strain DSM 25203 / XCL-2) (Thiomicrospira crunogena).